Consider the following 210-residue polypeptide: uncharacterized protein (210 aa).

This is an uncharacterized protein from Dictyostelium discoideum (Social amoeba).